The following is a 549-amino-acid chain: Glucose-6-phosphate isomerase (549 aa).

Glutamate 355 serves as the catalytic Proton donor. Residues histidine 387 and lysine 515 contribute to the active site.

Belongs to the GPI family.

The protein localises to the cytoplasm. It catalyses the reaction alpha-D-glucose 6-phosphate = beta-D-fructose 6-phosphate. The protein operates within carbohydrate biosynthesis; gluconeogenesis. It participates in carbohydrate degradation; glycolysis; D-glyceraldehyde 3-phosphate and glycerone phosphate from D-glucose: step 2/4. Its function is as follows. Catalyzes the reversible isomerization of glucose-6-phosphate to fructose-6-phosphate. In Histophilus somni (strain 129Pt) (Haemophilus somnus), this protein is Glucose-6-phosphate isomerase.